The sequence spans 245 residues: MLKTSIPSQGIQQNPLVCQLANSIEAVWQRYLNLEPYYLPADLGYVEGRLEGEKLIIQNKCYQTAQFRKLHLELATIGPKLDILHCVMFPRISYPLPIFGTDLVGARGQISAAVVDISPQSQDRKLPEVYNYQLQALPIKEFAHPRQLPQWGEIFSEFCLFIRPTGLEEEQKFISIVESYLEIHCQQAIAQKPVSPEQQLEILKAQHHYCTQQRQNDKTRRVLEKAFGPEWTDYYLTTVLFDSPN.

Belongs to the HY2 family.

It carries out the reaction (2R,3Z)-phycocyanobilin + 4 oxidized [2Fe-2S]-[ferredoxin] = biliverdin IXalpha + 4 reduced [2Fe-2S]-[ferredoxin] + 4 H(+). Catalyzes the four-electron reduction of biliverdin IX-alpha (2-electron reduction at both the A and D rings); the reaction proceeds via an isolatable 2-electron intermediate, 181,182-dihydrobiliverdin. The protein is Phycocyanobilin:ferredoxin oxidoreductase of Trichodesmium erythraeum (strain IMS101).